The following is a 451-amino-acid chain: UDP-N-acetylmuramoylalanine--D-glutamate ligase (451 aa).

119–125 (GSNGKTT) is an ATP binding site.

It belongs to the MurCDEF family.

It is found in the cytoplasm. The catalysed reaction is UDP-N-acetyl-alpha-D-muramoyl-L-alanine + D-glutamate + ATP = UDP-N-acetyl-alpha-D-muramoyl-L-alanyl-D-glutamate + ADP + phosphate + H(+). Its pathway is cell wall biogenesis; peptidoglycan biosynthesis. Functionally, cell wall formation. Catalyzes the addition of glutamate to the nucleotide precursor UDP-N-acetylmuramoyl-L-alanine (UMA). In Bacillus cytotoxicus (strain DSM 22905 / CIP 110041 / 391-98 / NVH 391-98), this protein is UDP-N-acetylmuramoylalanine--D-glutamate ligase.